Here is a 317-residue protein sequence, read N- to C-terminus: Protoheme IX farnesyltransferase (317 aa).

The next 9 membrane-spanning stretches (helical) occupy residues 29–49 (LILLFLITTAAAMEVAGQGRV), 53–73 (LLLITLGSGTCAAAAANTINC), 102–122 (VFLAVLLAITAFSLLAAFANL), 123–143 (LSACLAMAGIAVYVGVYTHWL), 151–171 (IVIGGAAGAIPPLVGWAAVTG), 179–199 (VLFGMIFVWTPPHFWPLAMLI), 224–241 (IFLYTLALVPTSLLLVYP), 245–267 (VSWGYGVVAIALGSWFIYRAWQL), and 283–303 (FSILYMMLLCAAMVGDRLLLP).

It belongs to the UbiA prenyltransferase family. Protoheme IX farnesyltransferase subfamily.

It localises to the cell inner membrane. The catalysed reaction is heme b + (2E,6E)-farnesyl diphosphate + H2O = Fe(II)-heme o + diphosphate. It participates in porphyrin-containing compound metabolism; heme O biosynthesis; heme O from protoheme: step 1/1. Its function is as follows. Converts heme B (protoheme IX) to heme O by substitution of the vinyl group on carbon 2 of heme B porphyrin ring with a hydroxyethyl farnesyl side group. This Thermosynechococcus vestitus (strain NIES-2133 / IAM M-273 / BP-1) protein is Protoheme IX farnesyltransferase.